A 219-amino-acid polypeptide reads, in one-letter code: uncharacterized protein (219 aa).

Positions 1-17 (MIINNQNSPQSINTPSS) are enriched in low complexity. Positions 1–31 (MIINNQNSPQSINTPSSVSSRQHINKSKKKK) are disordered. 2 helical membrane passes run 49 to 69 (SLAT…LVCK) and 83 to 105 (LVYR…SYIG). The disordered stretch occupies residues 135–219 (NHRSPIPLTN…NSDLEIPIPI (85 aa)). A compositionally biased stretch (low complexity) spans 144 to 212 (NLNNNNNNNN…SNNNNDNNSD (69 aa)).

It is found in the membrane. This is an uncharacterized protein from Dictyostelium discoideum (Social amoeba).